A 228-amino-acid chain; its full sequence is 2,3-bisphosphoglycerate-dependent phosphoglycerate mutase (228 aa).

Substrate is bound by residues 8–15 (RHGQSEWN), 21–22 (TG), R60, 87–90 (ERHY), K98, 114–115 (RR), and 183–184 (GN). H9 functions as the Tele-phosphohistidine intermediate in the catalytic mechanism. E87 functions as the Proton donor/acceptor in the catalytic mechanism.

The protein belongs to the phosphoglycerate mutase family. BPG-dependent PGAM subfamily.

The enzyme catalyses (2R)-2-phosphoglycerate = (2R)-3-phosphoglycerate. It functions in the pathway carbohydrate degradation; glycolysis; pyruvate from D-glyceraldehyde 3-phosphate: step 3/5. In terms of biological role, catalyzes the interconversion of 2-phosphoglycerate and 3-phosphoglycerate. This Staphylococcus haemolyticus (strain JCSC1435) protein is 2,3-bisphosphoglycerate-dependent phosphoglycerate mutase.